A 427-amino-acid chain; its full sequence is Diaminobutyrate--2-oxoglutarate transaminase (427 aa).

Lys-269 bears the N6-(pyridoxal phosphate)lysine mark.

This sequence belongs to the class-III pyridoxal-phosphate-dependent aminotransferase family. Pyridoxal 5'-phosphate serves as cofactor.

The catalysed reaction is L-2,4-diaminobutanoate + 2-oxoglutarate = L-aspartate 4-semialdehyde + L-glutamate. The protein operates within amine and polyamine biosynthesis; ectoine biosynthesis; L-ectoine from L-aspartate 4-semialdehyde: step 1/3. In terms of biological role, catalyzes reversively the conversion of L-aspartate beta-semialdehyde (ASA) to L-2,4-diaminobutyrate (DABA) by transamination with L-glutamate. This Marinococcus halophilus protein is Diaminobutyrate--2-oxoglutarate transaminase (ectB).